The primary structure comprises 848 residues: Coiled-coil domain-containing protein 110 (848 aa).

The tract at residues 41–62 (SEGVKESGGNEPEYGCASEPEN) is disordered. Positions 442 to 794 (LQNYLKESLQ…LSDKVSSQNN (353 aa)) form a coiled coil. A Phosphoserine modification is found at Ser620.

It is found in the nucleus. The sequence is that of Coiled-coil domain-containing protein 110 (Ccdc110) from Mus musculus (Mouse).